An 83-amino-acid chain; its full sequence is Small ribosomal subunit protein bS18 (83 aa).

This sequence belongs to the bacterial ribosomal protein bS18 family. Part of the 30S ribosomal subunit. Forms a tight heterodimer with protein bS6.

Its function is as follows. Binds as a heterodimer with protein bS6 to the central domain of the 16S rRNA, where it helps stabilize the platform of the 30S subunit. The sequence is that of Small ribosomal subunit protein bS18 from Methylobacterium sp. (strain 4-46).